The sequence spans 180 residues: Virion protein US10 homolog (180 aa).

Belongs to the herpesviridae US10 family. Phosphorylated.

The protein localises to the virion tegument. It localises to the host nucleus matrix. This chain is Virion protein US10 homolog (64), found in Varicella-zoster virus (strain Dumas) (HHV-3).